Consider the following 254-residue polypeptide: 3-deoxy-manno-octulosonate cytidylyltransferase (254 aa).

It belongs to the KdsB family.

Its subcellular location is the cytoplasm. The enzyme catalyses 3-deoxy-alpha-D-manno-oct-2-ulosonate + CTP = CMP-3-deoxy-beta-D-manno-octulosonate + diphosphate. The protein operates within nucleotide-sugar biosynthesis; CMP-3-deoxy-D-manno-octulosonate biosynthesis; CMP-3-deoxy-D-manno-octulosonate from 3-deoxy-D-manno-octulosonate and CTP: step 1/1. It functions in the pathway bacterial outer membrane biogenesis; lipopolysaccharide biosynthesis. In terms of biological role, activates KDO (a required 8-carbon sugar) for incorporation into bacterial lipopolysaccharide in Gram-negative bacteria. The protein is 3-deoxy-manno-octulosonate cytidylyltransferase of Chlamydia caviae (strain ATCC VR-813 / DSM 19441 / 03DC25 / GPIC) (Chlamydophila caviae).